The sequence spans 393 residues: 8-amino-7-oxononanoate synthase (393 aa).

A pyridoxal 5'-phosphate-binding site is contributed by 108-109; that stretch reads GF. H133 contacts substrate. Pyridoxal 5'-phosphate-binding positions include S182, 207–210, and 238–241; these read DDAH and TLSK. K241 bears the N6-(pyridoxal phosphate)lysine mark. Substrate is bound at residue T355.

It belongs to the class-II pyridoxal-phosphate-dependent aminotransferase family. BioF subfamily. In terms of assembly, homodimer. It depends on pyridoxal 5'-phosphate as a cofactor.

It carries out the reaction 6-carboxyhexanoyl-[ACP] + L-alanine + H(+) = (8S)-8-amino-7-oxononanoate + holo-[ACP] + CO2. It functions in the pathway cofactor biosynthesis; biotin biosynthesis. Its function is as follows. Catalyzes the decarboxylative condensation of pimeloyl-[acyl-carrier protein] and L-alanine to produce 8-amino-7-oxononanoate (AON), [acyl-carrier protein], and carbon dioxide. The sequence is that of 8-amino-7-oxononanoate synthase from Petrotoga mobilis (strain DSM 10674 / SJ95).